The following is a 307-amino-acid chain: Recombination-associated protein RdgC (307 aa).

The protein belongs to the RdgC family.

Its subcellular location is the cytoplasm. The protein localises to the nucleoid. In terms of biological role, may be involved in recombination. The protein is Recombination-associated protein RdgC of Burkholderia orbicola (strain MC0-3).